Reading from the N-terminus, the 866-residue chain is DNA mismatch repair protein MutS (866 aa).

Position 618–625 (Gly618–Ser625) interacts with ATP.

This sequence belongs to the DNA mismatch repair MutS family.

Its function is as follows. This protein is involved in the repair of mismatches in DNA. It is possible that it carries out the mismatch recognition step. This protein has a weak ATPase activity. In Flavobacterium psychrophilum (strain ATCC 49511 / DSM 21280 / CIP 103535 / JIP02/86), this protein is DNA mismatch repair protein MutS.